Here is a 355-residue protein sequence, read N- to C-terminus: MPFLGQDWRSPGQNWVKTADGWKRFLDEKSGSFVSDLSSYCNKEVYNKENLFNSLNYDVAAKKRKKDMLNSKTKTQYFHQEKWIYVHKGSTKERHGYCTLGEAFNRLDFSTAILDSRRFNYVVRLLELIAKSQLTSLSGIAQKNFMNILEKVVLKVLEDQQNIRLIRELLQTLYTSLCTLVQRVGKSVLVGNINMWVYRMETILHWQQQLNNIQITRPAFKGLTFTDLPLCLQLNIMQRLSDGRDLVSLGQAAPDLHVLSEDRLLWKKLCQYHFSERQIRKRLILSDKGQLDWKKMYFKLVRCYPRKEQYGDTLQLCKHCHILSWKGTDHPCTANNPESCSVSLSPQDFINLFKF.

The short motif at 62-67 is the Nuclear localization signal element; it reads KKRKKD. Residues 169–173 carry the Nuclear export signal motif; that stretch reads LLQTL. Positions 223-271 constitute an F-box domain; it reads LTFTDLPLCLQLNIMQRLSDGRDLVSLGQAAPDLHVLSEDRLLWKKLCQ. A Bipartite nuclear localization signal motif is present at residues 280-295; sequence RKRLILSDKGQLDWKK.

Part of the SCF (SKP1-CUL1-F-box) E3 ubiquitin-protein ligase complex SCF(FBXO32) formed of CUL1, SKP1, RBX1 and FBXO32. In terms of tissue distribution, specifically expressed in cardiac and skeletal muscle.

The protein resides in the cytoplasm. The protein localises to the nucleus. It participates in protein modification; protein ubiquitination. In terms of biological role, substrate recognition component of a SCF (SKP1-CUL1-F-box protein) E3 ubiquitin-protein ligase complex which mediates the ubiquitination and subsequent proteasomal degradation of target proteins. Probably recognizes and binds to phosphorylated target proteins during skeletal muscle atrophy. Recognizes TERF1. This is F-box only protein 32 (FBXO32) from Homo sapiens (Human).